A 257-amino-acid chain; its full sequence is MTSLLEIKDLTAFYGPLRAIKDVSLSIQEGSVTALIGPSGCGKSTLLRTLNRMHELSPGAKVKGQVLLDGRDLYQLDPVYVRQEVGMIFQRPNPFPTMSIRENVLAGIKLNRKRIHRIQQNELMERCLRSVNLWDEVHNRLGRPGGELSGGQQQRLCIARAIAVSPRVILMDEPCSALDPVSTKAIEQLICKLKEKHTIVIVTHNMQQASRVSDWTAVFNVARSGGSGELVEHDKTEVIFTSPKNEVTLNYISGKFG.

An ABC transporter domain is found at Leu-5–Glu-246. Gly-37–Ser-44 provides a ligand contact to ATP.

The protein belongs to the ABC transporter superfamily. Phosphate importer (TC 3.A.1.7) family. The complex is composed of two ATP-binding proteins (PstB), two transmembrane proteins (PstC and PstA) and a solute-binding protein (PstS).

The protein resides in the cell membrane. It carries out the reaction phosphate(out) + ATP + H2O = ADP + 2 phosphate(in) + H(+). Its function is as follows. Part of the ABC transporter complex PstSACB involved in phosphate import. Responsible for energy coupling to the transport system. This chain is Phosphate import ATP-binding protein PstB, found in Tropheryma whipplei (strain Twist) (Whipple's bacillus).